The chain runs to 249 residues: 5'-nucleotidase SurE 2 (249 aa).

A divalent metal cation-binding residues include aspartate 8, aspartate 9, serine 40, and asparagine 90.

Belongs to the SurE nucleotidase family. Requires a divalent metal cation as cofactor.

Its subcellular location is the cytoplasm. The enzyme catalyses a ribonucleoside 5'-phosphate + H2O = a ribonucleoside + phosphate. Functionally, nucleotidase that shows phosphatase activity on nucleoside 5'-monophosphates. In Pyrobaculum aerophilum (strain ATCC 51768 / DSM 7523 / JCM 9630 / CIP 104966 / NBRC 100827 / IM2), this protein is 5'-nucleotidase SurE 2.